Here is a 718-residue protein sequence, read N- to C-terminus: Acetolactate synthase, mitochondrial (718 aa).

Disordered regions lie at residues 1 to 50 and 72 to 101; these read MLTR…APVY and RKIQSSASTAAASPAVRPQPAQHFQAAPQP. Residues 32–45 are compositionally biased toward polar residues; sequence RYSNNIHTSSTQNA. Residues 76–99 show a composition bias toward low complexity; that stretch reads SSASTAAASPAVRPQPAQHFQAAP. Position 173 (Glu-173) interacts with thiamine diphosphate. Arg-275 provides a ligand contact to FAD. A disordered region spans residues 296-327; it reads IPAKSAQPGHSPYLPSNPLNPSSQPSDPLPGD. Residues 306–325 are compositionally biased toward low complexity; that stretch reads SPYLPSNPLNPSSQPSDPLP. Residues 397–418 and 449–468 contribute to the FAD site; these read HGSAYANFAMQEADVLIALGVR and EIQPKNINKIVEAQIPVLGD. A thiamine pyrophosphate binding region spans residues 541-621; sequence QHQMWACQYY…VKVLLFNNEF (81 aa). Positions 592 and 619 each coordinate Mg(2+).

This sequence belongs to the TPP enzyme family. It depends on Mg(2+) as a cofactor. The cofactor is thiamine diphosphate.

It is found in the mitochondrion. The catalysed reaction is 2 pyruvate + H(+) = (2S)-2-acetolactate + CO2. It functions in the pathway amino-acid biosynthesis; L-isoleucine biosynthesis; L-isoleucine from 2-oxobutanoate: step 1/4. It participates in amino-acid biosynthesis; L-valine biosynthesis; L-valine from pyruvate: step 1/4. The protein is Acetolactate synthase, mitochondrial (ILV2) of Cryptococcus neoformans var. neoformans serotype D (strain JEC21 / ATCC MYA-565) (Filobasidiella neoformans).